Consider the following 243-residue polypeptide: Voltage-gated monoatomic cation channel TMEM109 (243 aa).

A signal peptide spans 1 to 33 (MAASSISSPWGKHVFKAILMVLVALILLHSALA). Residues 34–83 (QSRRDFAPPGQQKREAPVDVLTQIGRSVRGTLDAWIGPETMHLVSESSSQ) lie on the Lumenal side of the membrane. The helical transmembrane segment at 84-104 (VLWAISSAISVAFFALSGIAA) threads the bilayer. Topologically, residues 105 to 135 (QLLNALGLAGDYLAQGLKLSPGQVQTFLLWG) are cytoplasmic. The helical transmembrane segment at 136–156 (AGALVVYWLLSLLLGLVLALL) threads the bilayer. At 157-185 (GRILWGLKLVIFLAGFVALMRSVPDPSTR) the chain is on the lumenal side. The helical transmembrane segment at 186-205 (ALLLLALLILYALLSRLTGS) threads the bilayer. Topologically, residues 206–243 (RASGAQLEAKVRGLERQVEELRWRQRRAAKGARSVEEE) are cytoplasmic.

Homooligomer. Interacts with CRYAB; in the cellular response to DNA damage.

It is found in the nucleus outer membrane. The protein resides in the endoplasmic reticulum membrane. It localises to the sarcoplasmic reticulum membrane. The catalysed reaction is K(+)(in) = K(+)(out). It catalyses the reaction Ca(2+)(in) = Ca(2+)(out). In terms of biological role, functions as a voltage-gated monoatomic cation channel permeable to both potassium and calcium. Plays a role in the cellular response to DNA damage. This Homo sapiens (Human) protein is Voltage-gated monoatomic cation channel TMEM109.